The following is a 448-amino-acid chain: Probable glycine dehydrogenase (decarboxylating) subunit 1 (448 aa).

The protein belongs to the GcvP family. N-terminal subunit subfamily. The glycine cleavage system is composed of four proteins: P, T, L and H. In this organism, the P 'protein' is a heterodimer of two subunits.

The enzyme catalyses N(6)-[(R)-lipoyl]-L-lysyl-[glycine-cleavage complex H protein] + glycine + H(+) = N(6)-[(R)-S(8)-aminomethyldihydrolipoyl]-L-lysyl-[glycine-cleavage complex H protein] + CO2. The glycine cleavage system catalyzes the degradation of glycine. The P protein binds the alpha-amino group of glycine through its pyridoxal phosphate cofactor; CO(2) is released and the remaining methylamine moiety is then transferred to the lipoamide cofactor of the H protein. This is Probable glycine dehydrogenase (decarboxylating) subunit 1 from Listeria innocua serovar 6a (strain ATCC BAA-680 / CLIP 11262).